A 155-amino-acid chain; its full sequence is 6,7-dimethyl-8-ribityllumazine synthase (155 aa).

5-amino-6-(D-ribitylamino)uracil is bound by residues Phe-24, 58 to 60 (AFE), and 82 to 84 (VII). Residue 87–88 (ST) coordinates (2S)-2-hydroxy-3-oxobutyl phosphate. His-90 acts as the Proton donor in catalysis. Phe-115 is a binding site for 5-amino-6-(D-ribitylamino)uracil. A (2S)-2-hydroxy-3-oxobutyl phosphate-binding site is contributed by Arg-129.

It belongs to the DMRL synthase family.

The enzyme catalyses (2S)-2-hydroxy-3-oxobutyl phosphate + 5-amino-6-(D-ribitylamino)uracil = 6,7-dimethyl-8-(1-D-ribityl)lumazine + phosphate + 2 H2O + H(+). It functions in the pathway cofactor biosynthesis; riboflavin biosynthesis; riboflavin from 2-hydroxy-3-oxobutyl phosphate and 5-amino-6-(D-ribitylamino)uracil: step 1/2. In terms of biological role, catalyzes the formation of 6,7-dimethyl-8-ribityllumazine by condensation of 5-amino-6-(D-ribitylamino)uracil with 3,4-dihydroxy-2-butanone 4-phosphate. This is the penultimate step in the biosynthesis of riboflavin. The sequence is that of 6,7-dimethyl-8-ribityllumazine synthase from Chlorobium limicola (strain DSM 245 / NBRC 103803 / 6330).